Here is a 145-residue protein sequence, read N- to C-terminus: Small ribosomal subunit protein uS12 (145 aa).

Belongs to the universal ribosomal protein uS12 family. As to quaternary structure, component of the small ribosomal subunit. Mature ribosomes consist of a small (40S) and a large (60S) subunit. The 40S subunit contains about 32 different proteins and 1 molecule of RNA (18S). The 60S subunit contains 45 different proteins and 3 molecules of RNA (25S, 5.8S and 5S).

The protein localises to the cytoplasm. In terms of biological role, component of the ribosome, a large ribonucleoprotein complex responsible for the synthesis of proteins in the cell. The small ribosomal subunit (SSU) binds messenger RNAs (mRNAs) and translates the encoded message by selecting cognate aminoacyl-transfer RNA (tRNA) molecules. The large subunit (LSU) contains the ribosomal catalytic site termed the peptidyl transferase center (PTC), which catalyzes the formation of peptide bonds, thereby polymerizing the amino acids delivered by tRNAs into a polypeptide chain. The nascent polypeptides leave the ribosome through a tunnel in the LSU and interact with protein factors that function in enzymatic processing, targeting, and the membrane insertion of nascent chains at the exit of the ribosomal tunnel. The protein is Small ribosomal subunit protein uS12 (RPS23A) of Candida albicans (strain SC5314 / ATCC MYA-2876) (Yeast).